A 204-amino-acid polypeptide reads, in one-letter code: MRG/MORF4L-binding protein (204 aa).

Over residues Met-1–Lys-15 the composition is skewed to gly residues. The interval Met-1–Glu-27 is disordered. Gly-2 is modified (N-acetylglycine). Ser-23 carries the phosphoserine modification. A Glycyl lysine isopeptide (Lys-Gly) (interchain with G-Cter in SUMO2) cross-link involves residue Lys-127. Composition is skewed to basic and acidic residues over residues Glu-128–Ala-140 and Ala-153–Asp-175. The disordered stretch occupies residues Glu-128–Thr-204. Residues Ala-189–Ala-198 are compositionally biased toward low complexity. A phosphoserine mark is found at Ser-191 and Ser-195.

It belongs to the EAF7 family. In terms of assembly, component of the NuA4 histone acetyltransferase complex which contains the catalytic subunit KAT5/TIP60 and the subunits EP400, TRRAP/PAF400, BRD8/SMAP, EPC1, DMAP1/DNMAP1, RUVBL1/TIP49, RUVBL2, ING3, actin, ACTL6A/BAF53A, MORF4L1/MRG15, MORF4L2/MRGX, MRGBP, YEATS4/GAS41, VPS72/YL1 and MEAF6. MRGBP may interact directly with MORF4L1/MRG15 and MORF4L2/MRGX.

The protein resides in the nucleus. In terms of biological role, component of the NuA4 histone acetyltransferase (HAT) complex which is involved in transcriptional activation of select genes principally by acetylation of nucleosomal histones H4 and H2A. This modification may both alter nucleosome - DNA interactions and promote interaction of the modified histones with other proteins which positively regulate transcription. This complex may be required for the activation of transcriptional programs associated with oncogene and proto-oncogene mediated growth induction, tumor suppressor mediated growth arrest and replicative senescence, apoptosis, and DNA repair. NuA4 may also play a direct role in DNA repair when recruited to sites of DNA damage. In Mus musculus (Mouse), this protein is MRG/MORF4L-binding protein (Mrgbp).